A 178-amino-acid chain; its full sequence is Ribosomal RNA small subunit methyltransferase G (178 aa).

S-adenosyl-L-methionine is bound by residues Gly-54, Leu-59, Leu-105–Glu-106, and Arg-120.

Belongs to the methyltransferase superfamily. RNA methyltransferase RsmG family.

The protein resides in the cytoplasm. It carries out the reaction guanosine(527) in 16S rRNA + S-adenosyl-L-methionine = N(7)-methylguanosine(527) in 16S rRNA + S-adenosyl-L-homocysteine. Functionally, specifically methylates the N7 position of guanine in position 527 of 16S rRNA. This Helicobacter pylori (strain ATCC 700392 / 26695) (Campylobacter pylori) protein is Ribosomal RNA small subunit methyltransferase G.